The following is a 481-amino-acid chain: UDP-glycosyltransferase 73B3 (481 aa).

Catalysis depends on His-21, which acts as the Proton acceptor. Residue His-21 participates in an anthocyanidin binding. The active-site Charge relay is the Asp-132. Ala-355, Gln-357, His-372, Trp-375, Asn-376, Ser-377, and Glu-380 together coordinate UDP-alpha-D-glucose. Ala-395 serves as a coordination point for an anthocyanidin. Residues Glu-396 and Gln-397 each coordinate UDP-alpha-D-glucose.

The protein belongs to the UDP-glycosyltransferase family. In terms of tissue distribution, expressed in roots and flowers.

The enzyme catalyses a flavonol + UDP-alpha-D-glucose = a flavonol 3-O-beta-D-glucoside + UDP + H(+). Possesses quercetin 3-O-glucosyltransferase activity in vitro. Also active in vitro on benzoates and benzoate derivatives. Involved in stress or defense responses. This chain is UDP-glycosyltransferase 73B3 (UGT73B3), found in Arabidopsis thaliana (Mouse-ear cress).